A 122-amino-acid polypeptide reads, in one-letter code: Small ribosomal subunit protein uS12 (122 aa).

Belongs to the universal ribosomal protein uS12 family. Part of the 30S ribosomal subunit. Contacts proteins S8 and S17. May interact with IF1 in the 30S initiation complex.

Its function is as follows. With S4 and S5 plays an important role in translational accuracy. In terms of biological role, interacts with and stabilizes bases of the 16S rRNA that are involved in tRNA selection in the A site and with the mRNA backbone. Located at the interface of the 30S and 50S subunits, it traverses the body of the 30S subunit contacting proteins on the other side and probably holding the rRNA structure together. The combined cluster of proteins S8, S12 and S17 appears to hold together the shoulder and platform of the 30S subunit. This chain is Small ribosomal subunit protein uS12, found in Corynebacterium efficiens (strain DSM 44549 / YS-314 / AJ 12310 / JCM 11189 / NBRC 100395).